A 227-amino-acid chain; its full sequence is Orotidine 5'-phosphate decarboxylase (227 aa).

Substrate-binding positions include aspartate 8, lysine 30, 59 to 68 (DLKLYDIPNT), threonine 118, arginine 178, glutamine 187, glycine 207, and arginine 208. Lysine 61 acts as the Proton donor in catalysis.

The protein belongs to the OMP decarboxylase family. Type 1 subfamily. Homodimer.

It catalyses the reaction orotidine 5'-phosphate + H(+) = UMP + CO2. It participates in pyrimidine metabolism; UMP biosynthesis via de novo pathway; UMP from orotate: step 2/2. Its function is as follows. Catalyzes the decarboxylation of orotidine 5'-monophosphate (OMP) to uridine 5'-monophosphate (UMP). The protein is Orotidine 5'-phosphate decarboxylase of Nitratiruptor sp. (strain SB155-2).